A 576-amino-acid polypeptide reads, in one-letter code: Protein NRT1/ PTR FAMILY 2.12 (576 aa).

11 helical membrane-spanning segments follow: residues 58 to 78 (FNVYYLWMGLTNFAPLLGALI), 89 to 109 (IAYASLFSILGLMTVTLTACL), 130 to 150 (KLQLGILFLGLGFLSIGSGGI), 176 to 196 (FFNWYYLTLTMVLIFSHTVVV), 203 to 223 (WVIGFSIPTSLMACAVVLFFV), 329 to 349 (VWSAGIISIVAMTTQATFMVF), 364 to 384 (IPAASITVISYITIGIWVPIY), 406 to 426 (MGIGIVFAILSMFTAGFVEGV), 441 to 461 (WLALPLILMGLCESFNFIGLI), 475 to 495 (IANSLFPLSFAAANYLSSLLV), and 522 to 542 (YFYYLIAVLGVVNLVYFWYCA).

It belongs to the major facilitator superfamily. Proton-dependent oligopeptide transporter (POT/PTR) (TC 2.A.17) family. In terms of tissue distribution, expressed in flowers and siliques. Expressed in vascular bundle of the siliques and in funiculus.

The protein localises to the cell membrane. In terms of biological role, low-affinity proton-dependent nitrate transporter. Not involved in dipeptides transport. Involved in delivering nitrate for seed development. The protein is Protein NRT1/ PTR FAMILY 2.12 (NPF2.12) of Arabidopsis thaliana (Mouse-ear cress).